Here is a 393-residue protein sequence, read N- to C-terminus: uncharacterized protein (393 aa).

Residues 345-393 (PNKWATDDAARREMERTRKARYRAKNRAVADPEDSPPGKRLRRGPKSST) are disordered. Positions 349–361 (ATDDAARREMERT) are enriched in basic and acidic residues. Residues 383-393 (KRLRRGPKSST) are compositionally biased toward basic residues.

This is an uncharacterized protein from Ictalurid herpesvirus 1 (strain Auburn) (IcHV-1).